The primary structure comprises 126 residues: Holo-[acyl-carrier-protein] synthase (126 aa).

The Mg(2+) site is built by Asp-8 and Glu-57.

It belongs to the P-Pant transferase superfamily. AcpS family. Requires Mg(2+) as cofactor.

The protein resides in the cytoplasm. The enzyme catalyses apo-[ACP] + CoA = holo-[ACP] + adenosine 3',5'-bisphosphate + H(+). In terms of biological role, transfers the 4'-phosphopantetheine moiety from coenzyme A to a Ser of acyl-carrier-protein. This Geobacter metallireducens (strain ATCC 53774 / DSM 7210 / GS-15) protein is Holo-[acyl-carrier-protein] synthase.